The chain runs to 448 residues: Late embryogenesis abundant protein ECP63 (448 aa).

2 stretches are compositionally biased toward basic and acidic residues: residues 282 to 326 (TEEA…EEAG) and 334 to 354 (QKTR…KDSA). Disordered stretches follow at residues 282–360 (TEEA…RGNE) and 411–448 (SKPG…KGKL). Residues 297–331 (KENMEKAGEVTRQKMEEMRLEGKELKEEAGAKAQE) adopt a coiled-coil conformation. A compositionally biased stretch (polar residues) spans 420–432 (LKASDQMTGQTFN). The segment covering 435 to 448 (GRMDDDARKDKGKL) has biased composition (basic and acidic residues).

This sequence belongs to the LEA type 4 family. In terms of tissue distribution, expressed in mature seeds.

May be involved in the BHLH109-mediated regulation of somatic embryogenesis. The polypeptide is Late embryogenesis abundant protein ECP63 (Arabidopsis thaliana (Mouse-ear cress)).